Reading from the N-terminus, the 361-residue chain is Phospho-N-acetylmuramoyl-pentapeptide-transferase (361 aa).

10 helical membrane-spanning segments follow: residues 28–48, 74–94, 99–119, 133–153, 168–188, 203–223, 236–256, 263–283, 288–308, and 338–358; these read LAII…IKFL, TMGG…LADL, IWIT…DDYA, SKLL…EYTD, LSLD…VGSS, VPIA…GNLI, TGEL…FLWF, VFMG…ISVI, VVLS…ILQV, and KVVI…LSSL.

Belongs to the glycosyltransferase 4 family. MraY subfamily. The cofactor is Mg(2+).

The protein resides in the cell inner membrane. The enzyme catalyses UDP-N-acetyl-alpha-D-muramoyl-L-alanyl-gamma-D-glutamyl-meso-2,6-diaminopimeloyl-D-alanyl-D-alanine + di-trans,octa-cis-undecaprenyl phosphate = di-trans,octa-cis-undecaprenyl diphospho-N-acetyl-alpha-D-muramoyl-L-alanyl-D-glutamyl-meso-2,6-diaminopimeloyl-D-alanyl-D-alanine + UMP. Its pathway is cell wall biogenesis; peptidoglycan biosynthesis. Catalyzes the initial step of the lipid cycle reactions in the biosynthesis of the cell wall peptidoglycan: transfers peptidoglycan precursor phospho-MurNAc-pentapeptide from UDP-MurNAc-pentapeptide onto the lipid carrier undecaprenyl phosphate, yielding undecaprenyl-pyrophosphoryl-MurNAc-pentapeptide, known as lipid I. The protein is Phospho-N-acetylmuramoyl-pentapeptide-transferase of Rickettsia canadensis (strain McKiel).